The sequence spans 470 residues: Asparagine--tRNA ligase (470 aa).

The protein belongs to the class-II aminoacyl-tRNA synthetase family. Homodimer.

It is found in the cytoplasm. It carries out the reaction tRNA(Asn) + L-asparagine + ATP = L-asparaginyl-tRNA(Asn) + AMP + diphosphate + H(+). The sequence is that of Asparagine--tRNA ligase from Blochmanniella floridana.